The sequence spans 356 residues: Butyrate kinase (356 aa).

It belongs to the acetokinase family.

It localises to the cytoplasm. The enzyme catalyses butanoate + ATP = butanoyl phosphate + ADP. It participates in lipid metabolism; butanoate metabolism. Functionally, catalyzes the conversion of butyryl-CoA through butyryl phosphate to butyrate. In Clostridium perfringens (strain ATCC 13124 / DSM 756 / JCM 1290 / NCIMB 6125 / NCTC 8237 / Type A), this protein is Butyrate kinase (buk).